A 463-amino-acid polypeptide reads, in one-letter code: Fumarate hydratase class II (463 aa).

Substrate contacts are provided by residues 97-99 (SGT), 128-131 (HPND), 138-140 (SSN), and threonine 186. Catalysis depends on histidine 187, which acts as the Proton donor/acceptor. The active site involves serine 317. Substrate-binding positions include serine 318 and 323 to 325 (KVN).

This sequence belongs to the class-II fumarase/aspartase family. Fumarase subfamily. Homotetramer.

Its subcellular location is the cytoplasm. The enzyme catalyses (S)-malate = fumarate + H2O. It functions in the pathway carbohydrate metabolism; tricarboxylic acid cycle; (S)-malate from fumarate: step 1/1. Functionally, involved in the TCA cycle. Catalyzes the stereospecific interconversion of fumarate to L-malate. The sequence is that of Fumarate hydratase class II from Helicobacter pylori (strain ATCC 700392 / 26695) (Campylobacter pylori).